The chain runs to 549 residues: DNA mismatch repair protein MutL (549 aa).

Belongs to the DNA mismatch repair MutL/HexB family.

This protein is involved in the repair of mismatches in DNA. It is required for dam-dependent methyl-directed DNA mismatch repair. May act as a 'molecular matchmaker', a protein that promotes the formation of a stable complex between two or more DNA-binding proteins in an ATP-dependent manner without itself being part of a final effector complex. This Pseudothermotoga lettingae (strain ATCC BAA-301 / DSM 14385 / NBRC 107922 / TMO) (Thermotoga lettingae) protein is DNA mismatch repair protein MutL.